Consider the following 148-residue polypeptide: Large ribosomal subunit protein uL15 (148 aa).

The segment covering 1 to 30 (MPSRLRKTRKLRGHVSHGHGRIGKHRKHPG) has biased composition (basic residues). Residues 1–37 (MPSRLRKTRKLRGHVSHGHGRIGKHRKHPGGRGNAGG) form a disordered region. The residue at position 39 (H39) is a (3S)-3-hydroxyhistidine. Residues K47 and K55 each carry the N6-acetyllysine modification. S68 is modified (phosphoserine). At K110 the chain carries N6-acetyllysine.

It belongs to the universal ribosomal protein uL15 family. Component of the large ribosomal subunit. Hydroxylated on His-39 by MINA.

The protein localises to the cytoplasm. In terms of biological role, component of the large ribosomal subunit. The ribosome is a large ribonucleoprotein complex responsible for the synthesis of proteins in the cell. The polypeptide is Large ribosomal subunit protein uL15 (Rpl27a) (Mus musculus (Mouse)).